The primary structure comprises 360 residues: Vignain (360 aa).

An N-terminal signal peptide occupies residues 1–20; that stretch reads MQKFILLALSLALVLAITES. Positions 21–124 are cleaved as a propeptide — activation peptide; sequence FDFHEKELES…NGTFMYEKVD (104 aa). Asn-115 is a glycosylation site (N-linked (GlcNAc...) asparagine). 3 disulfides stabilise this stretch: Cys-147–Cys-189, Cys-181–Cys-222, and Cys-280–Cys-332. Cys-150 is an active-site residue. Residues His-286 and Asn-307 contribute to the active site. The segment at 341–360 is disordered; that stretch reads PIKKSSNNPSGIKSSPKDEL. Polar residues predominate over residues 344–353; that stretch reads KSSNNPSGIK. Positions 354-360 are cleaved as a propeptide — removed in mature form; it reads SSPKDEL. Positions 357–360 are prevents secretion from ER; the sequence is KDEL.

Belongs to the peptidase C1 family. Post-translationally, the potential N-glycosylation site at Asn-115 is not glycosylated.

The protein localises to the cytoplasmic vesicle. With respect to regulation, low pH triggers activation of the protease and removal of the propeptide and the KDEL motif. In terms of biological role, involved in programmed cell death. Shows a pronounced preference for hydrophobic residues in the P2 position and no obvious preference in the P1 position of the cleavage site. Accepts proline at the P1 and P1' positions. The protein is Vignain (CYSEP) of Ricinus communis (Castor bean).